An 883-amino-acid polypeptide reads, in one-letter code: Alanine--tRNA ligase (883 aa).

Histidine 560, histidine 564, cysteine 665, and histidine 669 together coordinate Zn(2+).

Belongs to the class-II aminoacyl-tRNA synthetase family. Requires Zn(2+) as cofactor.

The protein resides in the cytoplasm. It carries out the reaction tRNA(Ala) + L-alanine + ATP = L-alanyl-tRNA(Ala) + AMP + diphosphate. Its function is as follows. Catalyzes the attachment of alanine to tRNA(Ala) in a two-step reaction: alanine is first activated by ATP to form Ala-AMP and then transferred to the acceptor end of tRNA(Ala). Also edits incorrectly charged Ser-tRNA(Ala) and Gly-tRNA(Ala) via its editing domain. In Mesomycoplasma hyopneumoniae (strain J / ATCC 25934 / NCTC 10110) (Mycoplasma hyopneumoniae), this protein is Alanine--tRNA ligase.